We begin with the raw amino-acid sequence, 426 residues long: Alpha-ionylideneethane synthase abl3 (426 aa).

The protein belongs to the alpha-ionylideneethane synthase family.

The protein operates within hormone biosynthesis. Functionally, alpha-ionylideneethane synthase; part of the gene cluster that mediates the biosynthesis of abscisic acid (ABA), a phytohormone that acts antagonistically toward salicylic acid (SA), jasmonic acid (JA) and ethylene (ETH) signaling, to impede plant defense responses. The first step of the pathway catalyzes the reaction from farnesyl diphosphate to alpha-ionylideneethane performed by the alpha-ionylideneethane synthase abl3 via a three-step reaction mechanism involving 2 neutral intermediates, beta-farnesene and allofarnesene. The cytochrome P450 monooxygenase abl1 might then be involved in the conversion of alpha-ionylideneethane to alpha-ionylideneacetic acid. Alpha-ionylideneacetic acid is further converted to abscisic acid in 2 steps involving the cytochrome P450 monooxygenase abl2 and the short-chain dehydrogenase/reductase abl4, via the intermediates 1'-deoxy-ABA or 1',4'-trans-diol-ABA, depending on the order of action of these 2 enzymes. Abl2 is responsible for the hydroxylation of carbon atom C-1' and abl4 might be involved in the oxidation of the C-4' carbon atom. This chain is Alpha-ionylideneethane synthase abl3, found in Leptosphaeria maculans (strain JN3 / isolate v23.1.3 / race Av1-4-5-6-7-8) (Blackleg fungus).